Consider the following 413-residue polypeptide: Gamma-glutamyl phosphate reductase (413 aa).

The protein belongs to the gamma-glutamyl phosphate reductase family.

The protein resides in the cytoplasm. The enzyme catalyses L-glutamate 5-semialdehyde + phosphate + NADP(+) = L-glutamyl 5-phosphate + NADPH + H(+). It participates in amino-acid biosynthesis; L-proline biosynthesis; L-glutamate 5-semialdehyde from L-glutamate: step 2/2. In terms of biological role, catalyzes the NADPH-dependent reduction of L-glutamate 5-phosphate into L-glutamate 5-semialdehyde and phosphate. The product spontaneously undergoes cyclization to form 1-pyrroline-5-carboxylate. The sequence is that of Gamma-glutamyl phosphate reductase from Salinispora tropica (strain ATCC BAA-916 / DSM 44818 / JCM 13857 / NBRC 105044 / CNB-440).